The following is a 428-amino-acid chain: Glutamate-1-semialdehyde 2,1-aminomutase (428 aa).

K265 is modified (N6-(pyridoxal phosphate)lysine).

The protein belongs to the class-III pyridoxal-phosphate-dependent aminotransferase family. HemL subfamily. Homodimer. Pyridoxal 5'-phosphate serves as cofactor.

The protein localises to the cytoplasm. It catalyses the reaction (S)-4-amino-5-oxopentanoate = 5-aminolevulinate. The protein operates within porphyrin-containing compound metabolism; protoporphyrin-IX biosynthesis; 5-aminolevulinate from L-glutamyl-tRNA(Glu): step 2/2. The polypeptide is Glutamate-1-semialdehyde 2,1-aminomutase (Legionella pneumophila (strain Paris)).